The sequence spans 185 residues: Ribosome-recycling factor (185 aa).

This sequence belongs to the RRF family.

Its subcellular location is the cytoplasm. Functionally, responsible for the release of ribosomes from messenger RNA at the termination of protein biosynthesis. May increase the efficiency of translation by recycling ribosomes from one round of translation to another. This Lactococcus lactis subsp. lactis (strain IL1403) (Streptococcus lactis) protein is Ribosome-recycling factor.